Consider the following 554-residue polypeptide: Arginine--tRNA ligase (554 aa).

Positions Ala-129–His-139 match the 'HIGH' region motif.

This sequence belongs to the class-I aminoacyl-tRNA synthetase family. As to quaternary structure, monomer.

Its subcellular location is the cytoplasm. The enzyme catalyses tRNA(Arg) + L-arginine + ATP = L-arginyl-tRNA(Arg) + AMP + diphosphate. The protein is Arginine--tRNA ligase of Syntrophotalea carbinolica (strain DSM 2380 / NBRC 103641 / GraBd1) (Pelobacter carbinolicus).